A 186-amino-acid polypeptide reads, in one-letter code: uncharacterized protein (186 aa).

This sequence belongs to the geranylgeranyl reductase family. ChlP subfamily.

This is an uncharacterized protein from Methanosarcina barkeri.